The sequence spans 130 residues: Fluoride-specific ion channel FluC (130 aa).

4 helical membrane-spanning segments follow: residues 9 to 29, 39 to 59, 71 to 91, and 104 to 124; these read LAIILGAIPGALARYYATIFL, YATFLINFSGCVGMGLVVTLA, LLLAVGFLGSYTTFSTYALEV, and VLYGLGSLGIGTIGVLLGSLI. The Na(+) site is built by Gly79 and Thr82.

This sequence belongs to the fluoride channel Fluc/FEX (TC 1.A.43) family.

It localises to the cell inner membrane. It catalyses the reaction fluoride(in) = fluoride(out). With respect to regulation, na(+) is not transported, but it plays an essential structural role and its presence is essential for fluoride channel function. In terms of biological role, fluoride-specific ion channel. Important for reducing fluoride concentration in the cell, thus reducing its toxicity. In Synechocystis sp. (strain ATCC 27184 / PCC 6803 / Kazusa), this protein is Fluoride-specific ion channel FluC.